A 340-amino-acid chain; its full sequence is Fructose-1,6-bisphosphatase class 1 (340 aa).

The Mg(2+) site is built by Glu107, Asp126, Leu128, and Asp129. Residue Asn215 participates in substrate binding. A Mg(2+)-binding site is contributed by Glu287.

Belongs to the FBPase class 1 family. In terms of assembly, homotetramer. Mg(2+) is required as a cofactor.

It localises to the cytoplasm. It carries out the reaction beta-D-fructose 1,6-bisphosphate + H2O = beta-D-fructose 6-phosphate + phosphate. It functions in the pathway carbohydrate biosynthesis; gluconeogenesis. The chain is Fructose-1,6-bisphosphatase class 1 from Brucella ovis (strain ATCC 25840 / 63/290 / NCTC 10512).